Consider the following 678-residue polypeptide: Pentatricopeptide repeat-containing protein At5g39980, chloroplastic (678 aa).

A chloroplast-targeting transit peptide spans 1 to 64; the sequence is MYIEIASSSS…NKKVWRKQPE (64 aa). 14 PPR repeats span residues 154 to 188, 189 to 223, 224 to 258, 259 to 293, 294 to 328, 329 to 363, 364 to 398, 399 to 433, 434 to 468, 469 to 503, 535 to 569, 570 to 604, 605 to 638, and 639 to 674; these read SVFAYNVVLRNVLRAKQFDIAHGLFDEMRQRALAP, DRYTYSTLITSFGKEGMFDSALSWLQKMEQDRVSG, DLVLYSNLIELSRRLCDYSKAISIFSRLKRSGITP, DLVAYNSMINVYGKAKLFREARLLIKEMNEAGVLP, NTVSYSTLLSVYVENHKFLEALSVFAEMKEVNCAL, DLTTCNIMIDVYGQLDMVKEADRLFWSLRKMDIEP, NVVSYNTILRVYGEAELFGEAIHLFRLMQRKDIEQ, NVVTYNTMIKIYGKTMEHEKATNLVQEMQSRGIEP, NAITYSTIISIWGKAGKLDRAATLFQKLRSSGVEI, DQVLYQTMIVAYERVGLMGHAKRLLHELKLPDNIP, DISVFGCMINLYSRNQRYVNVIEVFEKMRTAGYFP, DSNVIAMVLNAYGKQREFEKADTVYREMQEEGCVF, PDEVHFQMLSLYSSKKDFEMVESLFQRLESDPNV, and NSKELHLVVAALYERADKLNDASRVMNRMRERGILK.

The protein belongs to the PPR family. P subfamily.

The protein localises to the plastid. It localises to the chloroplast. The sequence is that of Pentatricopeptide repeat-containing protein At5g39980, chloroplastic from Arabidopsis thaliana (Mouse-ear cress).